Reading from the N-terminus, the 760-residue chain is MTNIFNAMRVTATVGGKEIVFETGRLANQADGAVWIQCGGTVVLVTACSQATDRDLGFFPLTVEYSEKMYAAGRIPGSFFRREIGRPSERETLVSRLIDRPIRPLFPKGLKDEVQVLANVISSDQNNDSDVLAVTGASTALGLSSIPFDGPVAGARIGRIDGQFVINPTIKEMERSDLNIVLAASRDAVVMVEGEASFVPEAVIVEALEWGHKEIQPLIDAQLKLREMAGKAKREFTAPVEDADLAARVAALATADLDVALRIPEKMARKDARKAVKEKVMEALVADPAYAEDTTPLRAVGDILSALEKRIVRERIVREGRRIDGRDTTTVRPILIEAGILPRAHGSALFARGETKSLVVATLGSSTDEQRMDSLTGDVTKRFMLHYNFAPYCVGEVKPVRVSRREIGHGALAEKALRPILPLGEDFPFTLRVVAETMESNGSSSMAAVCGGCLSLMDAGVPITAPVAGVAMGLIKEGDQYVVLTDILGDEDALGDMDFKIAGTSEGITAVQMDIKVKGLPTDVMARAMQQARDARLHILGEMGKVLEAPRAELSAYAPQHAEVFVNPDIIRIIIGPGGKNIKAITATTGASIDIEDSGRVSIFAPTLEAMEMAREMVQYYDQRADIGKNYTGKVRKVLEIGAIVEILPNLEALVHISQLDTNRVEQASDVARLGEDMVVKVIEINGDRIRASRKAVLLEEQGIEWKPEDTARPSGPREGGRRDGGRDGRRDGGRDGRRDGGRDGGRRDGGRRDGGRDRN.

Residues Asp492 and Asp498 each coordinate Mg(2+). The region spanning 559-618 (PQHAEVFVNPDIIRIIIGPGGKNIKAITATTGASIDIEDSGRVSIFAPTLEAMEMAREMV) is the KH domain. In terms of domain architecture, S1 motif spans 628-702 (GKNYTGKVRK…SRKAVLLEEQ (75 aa)). A disordered region spans residues 706 to 760 (WKPEDTARPSGPREGGRRDGGRDGRRDGGRDGRRDGGRDGGRRDGGRRDGGRDRN). The span at 719–760 (EGGRRDGGRDGRRDGGRDGRRDGGRDGGRRDGGRRDGGRDRN) shows a compositional bias: basic and acidic residues.

It belongs to the polyribonucleotide nucleotidyltransferase family. Mg(2+) is required as a cofactor.

Its subcellular location is the cytoplasm. It catalyses the reaction RNA(n+1) + phosphate = RNA(n) + a ribonucleoside 5'-diphosphate. Involved in mRNA degradation. Catalyzes the phosphorolysis of single-stranded polyribonucleotides processively in the 3'- to 5'-direction. This is Polyribonucleotide nucleotidyltransferase from Nitratidesulfovibrio vulgaris (strain ATCC 29579 / DSM 644 / CCUG 34227 / NCIMB 8303 / VKM B-1760 / Hildenborough) (Desulfovibrio vulgaris).